A 560-amino-acid chain; its full sequence is Vanillyl-alcohol oxidase (560 aa).

Residues 67–272 (DYFLASAIVA…TKIGIWLMPN (206 aa)) enclose the FAD-binding PCMH-type domain. Residue Y108 is part of the active site. H422 is subject to Tele-8alpha-FAD histidine. Active-site residues include Y503 and R504.

It to bacterial flavocytochrome p-cresol methyl hydroxylase. As to quaternary structure, homooctamer (tetramer of tightly interacting dimers). The cofactor is FAD.

It localises to the peroxisome. Its subcellular location is the cytoplasm. The catalysed reaction is 4-hydroxy-3-methoxy-benzenemethanol + O2 = vanillin + H2O2. Its activity is regulated as follows. Competitively inhibited by cinnamyl and coniferyl alcohols and by isoeugenol. Its function is as follows. Catalyzes the conversion of vanillin alcohol to vanillin, and also the conversion of a wide range of phenolic compounds bearing side chains of variable size at the para position of the aromatic ring. Crucial for the degradation of the secondary metabolites derived from the degradation of the lignin. Catalyzes besides the oxidation of 4-hydroxybenzyl alcohols, the oxidative deamination of 4-hydroxybenzylamines, the oxidative demethylation of 4-(methoxy-methyl)phenols and the oxidative hydration of 4-allylphenols. Most active with 4-allylphenols. This is Vanillyl-alcohol oxidase (VAOA) from Penicillium simplicissimum.